Consider the following 585-residue polypeptide: Methicillin resistance mecR1 protein (585 aa).

Positions 351–585 (LNQLAPYFKG…ERILKEMELI (235 aa)) are beta-lactamase-like.

It belongs to the peptidase M56 family.

Its function is as follows. Penicillin-interactive protein and potential antirepressor. The sequence is that of Methicillin resistance mecR1 protein (mecR1) from Staphylococcus aureus (strain Mu50 / ATCC 700699).